We begin with the raw amino-acid sequence, 574 residues long: Phenylalanine--tRNA ligase beta subunit (574 aa).

The 76-residue stretch at 278–353 (LTPKEFEVEL…IAYGYNEIEP (76 aa)) folds into the B5 domain. 4 residues coordinate Mg(2+): D331, D337, E340, and D341.

It belongs to the phenylalanyl-tRNA synthetase beta subunit family. Type 2 subfamily. In terms of assembly, tetramer of two alpha and two beta subunits. It depends on Mg(2+) as a cofactor.

It localises to the cytoplasm. The enzyme catalyses tRNA(Phe) + L-phenylalanine + ATP = L-phenylalanyl-tRNA(Phe) + AMP + diphosphate + H(+). This Thermococcus kodakarensis (strain ATCC BAA-918 / JCM 12380 / KOD1) (Pyrococcus kodakaraensis (strain KOD1)) protein is Phenylalanine--tRNA ligase beta subunit.